Here is a 207-residue protein sequence, read N- to C-terminus: Fibroblast growth factor 18 (207 aa).

The first 27 residues, 1 to 27, serve as a signal peptide directing secretion; sequence MYSAPSTCTCLCLHFLLLCFQVQVLAA. Asn39 carries N-linked (GlcNAc...) asparagine glycosylation. Cys109 and Cys127 are joined by a disulfide. Asn137 carries an N-linked (GlcNAc...) asparagine glycan.

This sequence belongs to the heparin-binding growth factors family. As to quaternary structure, interacts with FGFR3 and FGFR4.

Its subcellular location is the secreted. Functionally, plays an important role in the regulation of cell proliferation, cell differentiation and cell migration. Required for normal ossification and bone development. Stimulates hepatic and intestinal proliferation. The chain is Fibroblast growth factor 18 (FGF18) from Bos taurus (Bovine).